The chain runs to 274 residues: Glutamate--cysteine ligase regulatory subunit (274 aa).

Residue S59 is modified to Phosphoserine. The residue at position 263 (K263) is an N6-acetyllysine.

Belongs to the aldo/keto reductase family. Glutamate--cysteine ligase light chain subfamily. In terms of assembly, heterodimer of a catalytic heavy chain and a regulatory light chain.

It participates in sulfur metabolism; glutathione biosynthesis; glutathione from L-cysteine and L-glutamate: step 1/2. The chain is Glutamate--cysteine ligase regulatory subunit (GCLM) from Bos taurus (Bovine).